Consider the following 374-residue polypeptide: Queuine tRNA-ribosyltransferase (374 aa).

Residue D89 is the Proton acceptor of the active site. Substrate contacts are provided by residues 89-93 (DSGGF), D143, Q187, and G214. Positions 245-251 (GVGKPED) are RNA binding. Residue D264 is the Nucleophile of the active site. The tract at residues 269–273 (TRNAR) is RNA binding; important for wobble base 34 recognition. Positions 302, 304, 307, and 333 each coordinate Zn(2+).

This sequence belongs to the queuine tRNA-ribosyltransferase family. In terms of assembly, homodimer. Within each dimer, one monomer is responsible for RNA recognition and catalysis, while the other monomer binds to the replacement base PreQ1. Requires Zn(2+) as cofactor.

The catalysed reaction is 7-aminomethyl-7-carbaguanine + guanosine(34) in tRNA = 7-aminomethyl-7-carbaguanosine(34) in tRNA + guanine. Its pathway is tRNA modification; tRNA-queuosine biosynthesis. Its function is as follows. Catalyzes the base-exchange of a guanine (G) residue with the queuine precursor 7-aminomethyl-7-deazaguanine (PreQ1) at position 34 (anticodon wobble position) in tRNAs with GU(N) anticodons (tRNA-Asp, -Asn, -His and -Tyr). Catalysis occurs through a double-displacement mechanism. The nucleophile active site attacks the C1' of nucleotide 34 to detach the guanine base from the RNA, forming a covalent enzyme-RNA intermediate. The proton acceptor active site deprotonates the incoming PreQ1, allowing a nucleophilic attack on the C1' of the ribose to form the product. After dissociation, two additional enzymatic reactions on the tRNA convert PreQ1 to queuine (Q), resulting in the hypermodified nucleoside queuosine (7-(((4,5-cis-dihydroxy-2-cyclopenten-1-yl)amino)methyl)-7-deazaguanosine). The protein is Queuine tRNA-ribosyltransferase of Shewanella baltica (strain OS185).